We begin with the raw amino-acid sequence, 413 residues long: Phosphopentomutase (413 aa).

The Mn(2+) site is built by Asp-11, Asp-306, His-311, Asp-347, His-348, and His-359.

It belongs to the phosphopentomutase family. Mn(2+) serves as cofactor.

Its subcellular location is the cytoplasm. The catalysed reaction is 2-deoxy-alpha-D-ribose 1-phosphate = 2-deoxy-D-ribose 5-phosphate. It carries out the reaction alpha-D-ribose 1-phosphate = D-ribose 5-phosphate. The protein operates within carbohydrate degradation; 2-deoxy-D-ribose 1-phosphate degradation; D-glyceraldehyde 3-phosphate and acetaldehyde from 2-deoxy-alpha-D-ribose 1-phosphate: step 1/2. Functionally, isomerase that catalyzes the conversion of deoxy-ribose 1-phosphate (dRib-1-P) and ribose 1-phosphate (Rib-1-P) to deoxy-ribose 5-phosphate (dRib-5-P) and ribose 5-phosphate (Rib-5-P), respectively. This chain is Phosphopentomutase, found in Helicobacter acinonychis (strain Sheeba).